Consider the following 1294-residue polypeptide: Disease resistance protein L6 (1294 aa).

The first 29 residues, 1 to 29 (MSYLREVATAVALLLPFILLNKFWRPNSK), serve as a signal peptide directing secretion. Residues 34-54 (NDDDDSTSEVDAISDSTNPSG) are disordered. The region spanning 59–221 (VEYEVFLSFR…AIADKVSADI (163 aa)) is the TIR domain. NAD(+) contacts are provided by residues 68-73 (RGPDTR) and Gly-101. Residue Glu-135 is part of the active site. An NB-ARC domain is found at 241–480 (DDHITAVLEK…VYDRLKISYD (240 aa)). LRR repeat units lie at residues 246–268 (AVLE…GMGG), 468–492 (LDEV…IFLD), 604–625 (LSEL…NNLL), 626–650 (PNLK…NYTM), 904–928 (LENL…GLQG), 1012–1039 (FPML…SLEE), 1063–1085 (LQKL…LEEL), 1086–1109 (KSLQ…KLKE), 1179–1203 (LEEL…SFLS), 1205–1229 (LQKL…ELKS), and 1254–1278 (LKNL…ALKT).

It belongs to the disease resistance TIR-NB-LRR family. In terms of assembly, homooligomer; homooligomerization is required for activity.

It carries out the reaction NAD(+) + H2O = ADP-D-ribose + nicotinamide + H(+). The catalysed reaction is NADP(+) + H2O = ADP-D-ribose 2'-phosphate + nicotinamide + H(+). The enzyme catalyses NAD(+) = 2'cADPR + nicotinamide + H(+). In terms of biological role, TIR-NB-LRR receptor-like protein that confers resistance to the flax rust phytopathogenic fungus (M.lini). An NAD(+) hydrolase (NADase): in response to activation, catalyzes cleavage of NAD(+) into ADP-D-ribose (ADPR) and nicotinamide; NAD(+) cleavage triggering a defense system that promotes cell death. Also able to hydrolyze NADP(+), but not other NAD(+)-related molecules. Makes small amounts of 2' cyclic ADPR (2'cADPR). In Linum usitatissimum (Flax), this protein is Disease resistance protein L6.